The primary structure comprises 246 residues: Probable phosphatase PBPRB2022 (246 aa).

9 residues coordinate Zn(2+): His-8, His-10, His-16, His-41, Glu-74, His-102, His-132, Asp-193, and His-195.

This sequence belongs to the PHP family. Zn(2+) is required as a cofactor.

The protein is Probable phosphatase PBPRB2022 of Photobacterium profundum (strain SS9).